Reading from the N-terminus, the 564-residue chain is MSEAEKKASQDAQHKEPMADSETQLDSDSAPSSQAEKPAKTKYPLSFWLAFGALCLTGLISAMEGSIVSTSLPSIIAELKAAFQPLYGQLADLWGRRYVMILATAIFLLGSGICGGANSMDMLIWGRAVQGIGAGGINMLVDLIICDLVPMRERGNFIGLLFLFVSIGTTSGPIIGGALTDNTTWRWVFYINLPMGGAALVLLVLFLQVKWKKELSTRDRLKRIDVVGNAILVGATFSILYALTYGGTRYPWSAANIVAPFVLGFVGLGIFIAWESNKRWCPYPVMPLHHFNSRTASASFFISFMTMILAFWVVYFYPVYFQSVLGNTPTISGVHLLPFEVSFPIFAAVGGGLVSKTGRYKPIHMVATSIVTIAIGASSVLTQHTHKAAWAVLQIFIGMGLGSLISTTLQAVQAGLPESETAASTATWAYMRSLGTIWGVSVPAAIFNNRFDQLSGQLDPSIRDNFVRGQAYEHATAQFVQSFEPATREVVIGAYTDALRRVWLVSIAFGAVTVLSTLFEKELTLRTELDSEFGLAEKKGDAKGDVERGEGQNDSREGGQNENV.

Residues 1–18 (MSEAEKKASQDAQHKEPM) show a composition bias toward basic and acidic residues. The interval 1–37 (MSEAEKKASQDAQHKEPMADSETQLDSDSAPSSQAEK) is disordered. Residues 21–35 (SETQLDSDSAPSSQA) are compositionally biased toward polar residues. A run of 4 helical transmembrane segments spans residues 43-63 (YPLSFWLAFGALCLTGLISAM), 98-118 (YVMILATAIFLLGSGICGGAN), 131-151 (GIGAGGINMLVDLIICDLVPM), and 157-177 (FIGLLFLFVSIGTTSGPIIGG). N-linked (GlcNAc...) asparagine glycosylation is present at Asn-182. 9 consecutive transmembrane segments (helical) span residues 187–207 (WVFYINLPMGGAALVLLVLFL), 226–246 (VVGNAILVGATFSILYALTYG), 254–274 (AANIVAPFVLGFVGLGIFIAW), 300–320 (FFISFMTMILAFWVVYFYPVY), 334–354 (VHLLPFEVSFPIFAAVGGGLV), 362–382 (PIHMVATSIVTIAIGASSVLT), 389–409 (AWAVLQIFIGMGLGSLISTTL), 427–447 (TWAYMRSLGTIWGVSVPAAIF), and 502–522 (VWLVSIAFGAVTVLSTLFEKE). Residues 540–564 (GDAKGDVERGEGQNDSREGGQNENV) are disordered. An N-linked (GlcNAc...) asparagine glycan is attached at Asn-553.

The protein belongs to the major facilitator superfamily.

It localises to the cell membrane. In terms of biological role, MFS-type efflux transporter; part of the gene cluster that mediates the biosynthesis of the cytotoxic leucine-containing cytochalasans, including aspochalasin C, aspochalasin E, TMC-169, flavichalasine F, aspergillin PZ, aspochalasin M and flavichalasine G. FfsH might be involved in the excretion of cytochalasans. In Aspergillus flavipes, this protein is MFS-type efflux transporter ffsH.